Consider the following 251-residue polypeptide: Triosephosphate isomerase (251 aa).

9–11 (NWK) contacts substrate. H94 (electrophile) is an active-site residue. E166 (proton acceptor) is an active-site residue. Substrate contacts are provided by residues G172, S211, and 232–233 (GG).

Belongs to the triosephosphate isomerase family. In terms of assembly, homodimer.

The protein localises to the cytoplasm. It carries out the reaction D-glyceraldehyde 3-phosphate = dihydroxyacetone phosphate. Its pathway is carbohydrate biosynthesis; gluconeogenesis. The protein operates within carbohydrate degradation; glycolysis; D-glyceraldehyde 3-phosphate from glycerone phosphate: step 1/1. In terms of biological role, involved in the gluconeogenesis. Catalyzes stereospecifically the conversion of dihydroxyacetone phosphate (DHAP) to D-glyceraldehyde-3-phosphate (G3P). The polypeptide is Triosephosphate isomerase (Xanthomonas axonopodis pv. citri (strain 306)).